The sequence spans 232 residues: BTB/POZ domain-containing protein KCTD11 (232 aa).

Residues 1-49 (MLGAMFRADTLMPANLNPQGDGHYFIDRDGKAFRHILNFLRLGRLDLPR) form the BTB domain.

Homopentamer. Interacts with KCTD6 and KCTD21; KCTD11 and KCTD6 or KCTD21 may associate in pentameric assemblies. Component of the BCR(KCTD11) E3 ubiquitin ligase complex, at least composed of CUL3 and KCTD11 and RBX1. Interacts (via BTB domain) with CUL3; initially a 4:4 stoichiometry has been reported, however, electron microscopy revealed pentameric states of the BTB domain. As to expression, weakly expressed in lung. In the cerebellum, higher expression in non proliferating external granule cells layer than in highly proliferating ones.

The protein operates within protein modification; protein ubiquitination. Functionally, plays a role as a marker and a regulator of neuronal differentiation; Up-regulated by a variety of neurogenic signals, such as retinoic acid, epidermal growth factor/EGF and NGFB/nerve growth factor. Induces apoptosis, growth arrest and the expression of cyclin-dependent kinase inhibitor CDKN1B. Plays a role as a tumor repressor and inhibits cell growth and tumorigenicity of medulloblastoma (MDB). Acts as a probable substrate-specific adapter for a BCR (BTB-CUL3-RBX1) E3 ubiquitin-protein ligase complex towards HDAC1. Functions as antagonist of the Hedgehog pathway on cell proliferation and differentiation by affecting the nuclear transfer of transcription factor GLI1, thus maintaining cerebellar granule cells in undifferentiated state, this effect probably occurs via HDAC1 down-regulation, keeping GLI1 acetylated and inactive. When knock-down, Hedgehog antagonism is impaired and proliferation of granule cells is sustained. Activates the caspase cascade. The polypeptide is BTB/POZ domain-containing protein KCTD11 (Kctd11) (Mus musculus (Mouse)).